A 90-amino-acid polypeptide reads, in one-letter code: Small ribosomal subunit protein uS15c (90 aa).

This sequence belongs to the universal ribosomal protein uS15 family. In terms of assembly, part of the 30S ribosomal subunit.

The protein localises to the plastid. Its subcellular location is the chloroplast. The sequence is that of Small ribosomal subunit protein uS15c (rps15-A) from Oryza nivara (Indian wild rice).